The chain runs to 98 residues: MTPTHFTISSAFLLGMMGLAFHRTHLLSALLCLEAMMLALFIALSLWSLQLDATGCSTAPMLMLAFSACEASAGLALLVATARTHGTDHMQALNLLQC.

The next 3 helical transmembrane spans lie at 1–21, 26–46, and 59–79; these read MTPTHFTISSAFLLGMMGLAF, LLSALLCLEAMMLALFIALSL, and APMLMLAFSACEASAGLALLV.

Belongs to the complex I subunit 4L family.

It localises to the mitochondrion membrane. It carries out the reaction a ubiquinone + NADH + 5 H(+)(in) = a ubiquinol + NAD(+) + 4 H(+)(out). Core subunit of the mitochondrial membrane respiratory chain NADH dehydrogenase (Complex I) which catalyzes electron transfer from NADH through the respiratory chain, using ubiquinone as an electron acceptor. Part of the enzyme membrane arm which is embedded in the lipid bilayer and involved in proton translocation. The chain is NADH-ubiquinone oxidoreductase chain 4L (MT-ND4L) from Gadus morhua (Atlantic cod).